Here is a 459-residue protein sequence, read N- to C-terminus: Tubulin gamma chain (459 aa).

142–148 lines the GTP pocket; that stretch reads AGGTGSG. The tract at residues 440 to 459 is disordered; sequence ADYLTKETAPTDEAEDKRAG.

This sequence belongs to the tubulin family.

The protein localises to the cytoplasm. The protein resides in the cytoskeleton. It is found in the microtubule organizing center. Its subcellular location is the spindle pole body. Functionally, tubulin is the major constituent of microtubules. The gamma chain is found at microtubule organizing centers (MTOC) such as the spindle poles or the centrosome, suggesting that it is involved in the minus-end nucleation of microtubule assembly. The sequence is that of Tubulin gamma chain (TUB4) from Cochliobolus heterostrophus (strain C5 / ATCC 48332 / race O) (Southern corn leaf blight fungus).